Consider the following 486-residue polypeptide: uncharacterized protein (486 aa).

The first 25 residues, 1–25 (MGTMRSVYLIIIIILFFAFISLSFG), serve as a signal peptide directing secretion. Basic and acidic residues-rich tracts occupy residues 306 to 316 (KKEEKENEESS) and 326 to 349 (KKEE…KQEK). Residues 306 to 349 (KKEEKENEESSKTINQMQRHKKEEKSQTQETKKPSKNEMNKQEK) are disordered.

This is an uncharacterized protein from Methanocaldococcus jannaschii (strain ATCC 43067 / DSM 2661 / JAL-1 / JCM 10045 / NBRC 100440) (Methanococcus jannaschii).